A 169-amino-acid polypeptide reads, in one-letter code: Peptide deformylase (169 aa).

C91 and H133 together coordinate Fe cation. Residue E134 is part of the active site. Residue H137 participates in Fe cation binding.

It belongs to the polypeptide deformylase family. It depends on Fe(2+) as a cofactor.

The catalysed reaction is N-terminal N-formyl-L-methionyl-[peptide] + H2O = N-terminal L-methionyl-[peptide] + formate. Functionally, removes the formyl group from the N-terminal Met of newly synthesized proteins. Requires at least a dipeptide for an efficient rate of reaction. N-terminal L-methionine is a prerequisite for activity but the enzyme has broad specificity at other positions. The chain is Peptide deformylase from Citrobacter koseri (strain ATCC BAA-895 / CDC 4225-83 / SGSC4696).